We begin with the raw amino-acid sequence, 222 residues long: GTP cyclohydrolase 1 (222 aa).

Zn(2+)-binding residues include C111, H114, and C182.

It belongs to the GTP cyclohydrolase I family. In terms of assembly, homomer.

It carries out the reaction GTP + H2O = 7,8-dihydroneopterin 3'-triphosphate + formate + H(+). Its pathway is cofactor biosynthesis; 7,8-dihydroneopterin triphosphate biosynthesis; 7,8-dihydroneopterin triphosphate from GTP: step 1/1. In Shigella boydii serotype 18 (strain CDC 3083-94 / BS512), this protein is GTP cyclohydrolase 1.